Reading from the N-terminus, the 411-residue chain is Probable phosphatase HAD1 (411 aa).

Positions Leu-14–Pro-23 are enriched in polar residues. Positions Leu-14–Phe-33 are disordered. Asp-61 serves as the catalytic Nucleophile. Asp-61, Asp-63, and Asp-338 together coordinate Mg(2+). The Proton donor role is filled by Asp-63. A disordered region spans residues Pro-296–Asp-386. Residues Val-326–Val-345 show a composition bias toward polar residues. The span at Ser-362–Arg-373 shows a compositional bias: basic and acidic residues.

This sequence belongs to the HAD-like hydrolase superfamily. In terms of processing, phosphorylated.

Probable phosphatase. Required for cell wall integrity and virulence. The chain is Probable phosphatase HAD1 from Cryptococcus neoformans var. grubii serotype A (strain H99 / ATCC 208821 / CBS 10515 / FGSC 9487) (Filobasidiella neoformans var. grubii).